The chain runs to 131 residues: Small ribosomal subunit protein uS8 (131 aa).

It belongs to the universal ribosomal protein uS8 family. As to quaternary structure, part of the 30S ribosomal subunit. Contacts proteins S5 and S12.

In terms of biological role, one of the primary rRNA binding proteins, it binds directly to 16S rRNA central domain where it helps coordinate assembly of the platform of the 30S subunit. In Burkholderia lata (strain ATCC 17760 / DSM 23089 / LMG 22485 / NCIMB 9086 / R18194 / 383), this protein is Small ribosomal subunit protein uS8.